The chain runs to 350 residues: Small ribosomal subunit protein uS3 (350 aa).

One can recognise a KH type-2 domain in the interval 38 to 106 (IRKMMSRGME…QVQLNILEVK (69 aa)). The segment at 211 to 350 (AEREAQEALQ…TPGTPEKAEE (140 aa)) is disordered. The span at 222–232 (QTRRDRPRRGP) shows a compositional bias: basic residues. A compositionally biased stretch (low complexity) spans 261–350 (NAPAAETAAS…TPGTPEKAEE (90 aa)).

Belongs to the universal ribosomal protein uS3 family. Part of the 30S ribosomal subunit. Forms a tight complex with proteins S10 and S14.

Its function is as follows. Binds the lower part of the 30S subunit head. Binds mRNA in the 70S ribosome, positioning it for translation. The protein is Small ribosomal subunit protein uS3 of Frankia alni (strain DSM 45986 / CECT 9034 / ACN14a).